We begin with the raw amino-acid sequence, 111 residues long: MQKLKVGDTIQVMAGAEASEKNPATKRGKVLKIDREAERVTVEGLRLVKRHMKKTPQSPEGGIVEKPGTIALANVQVVCAKCDKPTRVGIRTEGEEGKKKRFCKNCDALID.

This sequence belongs to the universal ribosomal protein uL24 family. In terms of assembly, part of the 50S ribosomal subunit.

One of two assembly initiator proteins, it binds directly to the 5'-end of the 23S rRNA, where it nucleates assembly of the 50S subunit. In terms of biological role, one of the proteins that surrounds the polypeptide exit tunnel on the outside of the subunit. The protein is Large ribosomal subunit protein uL24 of Myxococcus xanthus (strain DK1622).